The following is a 296-amino-acid chain: Fructose-bisphosphate aldolase class 1 (296 aa).

The active-site Proton acceptor is Glu-175. Residue Lys-212 is the Schiff-base intermediate with dihydroxyacetone-P of the active site.

It belongs to the class I fructose-bisphosphate aldolase family.

It carries out the reaction beta-D-fructose 1,6-bisphosphate = D-glyceraldehyde 3-phosphate + dihydroxyacetone phosphate. Its pathway is carbohydrate degradation; glycolysis; D-glyceraldehyde 3-phosphate and glycerone phosphate from D-glucose: step 4/4. The protein is Fructose-bisphosphate aldolase class 1 of Staphylococcus aureus (strain MSSA476).